The chain runs to 93 residues: Large ribosomal subunit protein uL23cz/uL23cy (93 aa).

Belongs to the universal ribosomal protein uL23 family. As to quaternary structure, part of the 50S ribosomal subunit.

The protein localises to the plastid. Its subcellular location is the chloroplast. Its function is as follows. Binds to 23S rRNA. The chain is Large ribosomal subunit protein uL23cz/uL23cy (rpl23-A) from Jasminum nudiflorum (Winter jasmine).